The following is a 280-amino-acid chain: Chemotaxis protein methyltransferase 2 (280 aa).

The region spanning 10–280 (FGNQEFHYTR…SVGQTVYSPA (271 aa)) is the CheR-type methyltransferase domain. S-adenosyl-L-methionine is bound by residues Asn-85, Thr-87, Arg-91, Glu-125, Asp-150, 208-209 (NL), and 226-227 (RN).

Interacts with the C-terminal pentapeptide GWEEF of the methyl-accepting chemotaxis protein McpB.

It carries out the reaction L-glutamyl-[protein] + S-adenosyl-L-methionine = [protein]-L-glutamate 5-O-methyl ester + S-adenosyl-L-homocysteine. Its function is as follows. Methylation of the methyl-accepting chemotaxis proteins (MCP) to form gamma-glutamyl methyl ester residues in MCP. It specifically targets the McpB chemoreceptor. This chain is Chemotaxis protein methyltransferase 2, found in Pseudomonas aeruginosa (strain ATCC 15692 / DSM 22644 / CIP 104116 / JCM 14847 / LMG 12228 / 1C / PRS 101 / PAO1).